A 493-amino-acid polypeptide reads, in one-letter code: GTPase Der (493 aa).

The EngA-type G 1 domain maps to proline 3–asparagine 166. GTP contacts are provided by residues glycine 9–serine 16, aspartate 56–isoleucine 60, and asparagine 118–aspartate 121. Residues asparagine 166–lysine 195 are disordered. Positions alanine 167 to glutamate 184 are enriched in acidic residues. The region spanning isoleucine 198–valine 371 is the EngA-type G 2 domain. GTP-binding positions include glycine 204–serine 211, aspartate 251–valine 255, and asparagine 316–aspartate 319. Positions threonine 372–glutamate 456 constitute a KH-like domain. Residues glycine 454–lysine 463 show a composition bias toward basic and acidic residues. Residues glycine 454–arginine 493 are disordered. A compositionally biased stretch (basic residues) spans valine 471–arginine 493.

This sequence belongs to the TRAFAC class TrmE-Era-EngA-EngB-Septin-like GTPase superfamily. EngA (Der) GTPase family. Associates with the 50S ribosomal subunit.

In terms of biological role, GTPase that plays an essential role in the late steps of ribosome biogenesis. The sequence is that of GTPase Der from Pseudomonas aeruginosa (strain ATCC 15692 / DSM 22644 / CIP 104116 / JCM 14847 / LMG 12228 / 1C / PRS 101 / PAO1).